The primary structure comprises 181 residues: Acireductone dioxygenase (181 aa).

Residues His98, His100, Glu104, and His142 each coordinate Fe(2+). Ni(2+)-binding residues include His98, His100, Glu104, and His142.

It belongs to the acireductone dioxygenase (ARD) family. In terms of assembly, monomer. Requires Fe(2+) as cofactor. Ni(2+) is required as a cofactor.

It carries out the reaction 1,2-dihydroxy-5-(methylsulfanyl)pent-1-en-3-one + O2 = 3-(methylsulfanyl)propanoate + CO + formate + 2 H(+). It catalyses the reaction 1,2-dihydroxy-5-(methylsulfanyl)pent-1-en-3-one + O2 = 4-methylsulfanyl-2-oxobutanoate + formate + 2 H(+). It participates in amino-acid biosynthesis; L-methionine biosynthesis via salvage pathway; L-methionine from S-methyl-5-thio-alpha-D-ribose 1-phosphate: step 5/6. Functionally, catalyzes 2 different reactions between oxygen and the acireductone 1,2-dihydroxy-3-keto-5-methylthiopentene (DHK-MTPene) depending upon the metal bound in the active site. Fe-containing acireductone dioxygenase (Fe-ARD) produces formate and 2-keto-4-methylthiobutyrate (KMTB), the alpha-ketoacid precursor of methionine in the methionine recycle pathway. Ni-containing acireductone dioxygenase (Ni-ARD) produces methylthiopropionate, carbon monoxide and formate, and does not lie on the methionine recycle pathway. The protein is Acireductone dioxygenase of Alcanivorax borkumensis (strain ATCC 700651 / DSM 11573 / NCIMB 13689 / SK2).